Here is a 610-residue protein sequence, read N- to C-terminus: UvrABC system protein C (610 aa).

The region spanning 16–94 (SQPGVYRMYD…IKLYQPRYNV (79 aa)) is the GIY-YIG domain. Positions 204–239 (DQVLTQLIARMEKASQDLAFEEAARIRDQIQAVRRV) constitute a UVR domain.

Belongs to the UvrC family. Interacts with UvrB in an incision complex.

It is found in the cytoplasm. In terms of biological role, the UvrABC repair system catalyzes the recognition and processing of DNA lesions. UvrC both incises the 5' and 3' sides of the lesion. The N-terminal half is responsible for the 3' incision and the C-terminal half is responsible for the 5' incision. The polypeptide is UvrABC system protein C (Salmonella schwarzengrund (strain CVM19633)).